The primary structure comprises 1022 residues: Protein trachealess (1022 aa).

Residues 86-139 (LRKEKSRDAARSRRGKENYEFYELAKMLPLPAAITSQLDKASIIRLTISYLKLR) enclose the bHLH domain. The PAS 1 domain occupies 174–244 (EQHQGTHILQ…DQLGLSLTSG (71 aa)). A disordered region spans residues 239–289 (LSLTSGGGGGGGSSSSGGGGGGAGGGMASPTSGASDDGSGTHGTNNPDVAA). Over residues 243-265 (SGGGGGGGSSSSGGGGGGAGGGM) the composition is skewed to gly residues. Over residues 280–289 (HGTNNPDVAA) the composition is skewed to polar residues. The PAS 2 domain occupies 391–461 (PPPSVHEIRL…KSHSDLIEKG (71 aa)). A PAC domain is found at 465 to 508 (TGYYRLMNKSGGYTWLQTCATVVCSTKNADEQNIICVNYVISNR). Disordered stretches follow at residues 525–686 (DSIK…ADSA), 849–896 (AMTP…GDVV), and 962–996 (DDQG…ASQA). 2 stretches are compositionally biased toward low complexity: residues 578–587 (RSAAASHGSS) and 611–625 (PTTV…TPPV). Positions 629 to 636 (KRKRKTKA) match the Nuclear localization signal motif. At Ser673 the chain carries Phosphoserine; by PKB/Akt1. Positions 851 to 864 (TPPSSVSPRDSNQP) are enriched in polar residues. Residues 987–996 (GSAGSSASQA) show a composition bias toward low complexity.

As to quaternary structure, efficient DNA binding requires dimerization with another bHLH protein. Heterodimer with tgo. Ser-673 phosphorylation by PKB/Akt1 is required for nuclear targeting and transcriptional activity. Trachea, salivary gland ducts, posterior spiracles (Filzkoeper primordia) and a subset of cells in the CNS.

The protein resides in the nucleus. Functionally, transcription factor, master regulator of tracheal cell fates in the embryo, necessary for the development of the salivary gland duct, Malpighian tubules and the posterior spiracles. It may induce a general fate of branched tubular structures of epithelial origin. Functions with tgo to regulate expression of btl. The protein is Protein trachealess (trh) of Drosophila melanogaster (Fruit fly).